A 405-amino-acid polypeptide reads, in one-letter code: MGALTIVAKYMIVAQIEVNGSVDKSDIIGALFSQTEGLLGKDMDLRELQMMGRIGRIEVDIFEKNGKTKAKIYIPSNLDRYETALVAALVESIERVGPYPASVKVIEIRDLREEKRKKIIEKAKELVKLIEEEILPDTKEIIERLKEDVAKAEVVEYGPERLPAGPDVDKSDAIIIVEGRADVVNLVKHGYRNVIALEGISRGVPQTIIDLSKKKNVTVFIDGDKGGELVLKELLKVAHVDYIARAPPGKEVEQLTAKEIAKALRNKISLEEWLAQQKASGERAEAPPQPAQQPQQEQPAPQRPIQAPFDLEKKIEEMLGTLEAEIYDQNWTLVKRLPVRELPDFLATSGDSIYAIILDGITTQRIVDLAAKKGVKVIITARTGPLTKVPEDMSIYTFEQLKKTE.

Residues 172-248 enclose the Toprim domain; it reads DAIIIVEGRA…HVDYIARAPP (77 aa). 3 residues coordinate Mg(2+): Glu-178, Asp-222, and Asp-224. The disordered stretch occupies residues 279–303; it reads ASGERAEAPPQPAQQPQQEQPAPQR. Low complexity predominate over residues 292–303; that stretch reads QQPQQEQPAPQR.

The protein belongs to the archaeal DnaG primase family. In terms of assembly, forms a ternary complex with MCM helicase and DNA. Component of the archaeal exosome complex. Mg(2+) is required as a cofactor.

The enzyme catalyses ssDNA + n NTP = ssDNA/pppN(pN)n-1 hybrid + (n-1) diphosphate.. In terms of biological role, RNA polymerase that catalyzes the synthesis of short RNA molecules used as primers for DNA polymerase during DNA replication. Also part of the exosome, which is a complex involved in RNA degradation. Acts as a poly(A)-binding protein that enhances the interaction between heteromeric, adenine-rich transcripts and the exosome. This Pyrobaculum arsenaticum (strain DSM 13514 / JCM 11321 / PZ6) protein is DNA primase DnaG.